Reading from the N-terminus, the 94-residue chain is MTGGISPHPINATPEIQEITNTVKEQLEKKLGTNYSIFQAISYKKQLVNGMNYFIKVKTDNGYDHIRVYEAFKGTPNLVSVQQHKSLEDDITYF.

A Secondary area of contact motif is present at residues 46–50 (QLVNG).

Belongs to the cystatin family.

Its subcellular location is the cytoplasm. Its function is as follows. Intracellular thiol proteinase inhibitor. The polypeptide is Cystatin-A3 (cpiC) (Dictyostelium discoideum (Social amoeba)).